A 1197-amino-acid chain; its full sequence is SRC kinase signaling inhibitor 1 (1197 aa).

Positions 19-45 (AEGRARSPREEVGPRDPGGRGEPDPER) are enriched in basic and acidic residues. Residues 19–80 (AEGRARSPRE…GGSGGRRFSN (62 aa)) form a disordered region. Phosphoserine occurs at positions 47 and 52. Gly residues predominate over residues 65-75 (LGGGGSGGSGG). A Phosphoserine modification is found at Ser79. Residue Thr86 is modified to Phosphothreonine. A phosphoserine mark is found at Ser87, Ser98, Ser178, Ser200, Ser204, Ser214, and Ser260. Tyr276 is subject to Phosphotyrosine. The segment at 319–415 (ASRESSPTRR…RRDVKPDEDL (97 aa)) is disordered. Residues 321-331 (RESSPTRRLNN) are compositionally biased toward polar residues. Over residues 332 to 341 (LSPASHLASS) the composition is skewed to low complexity. Phosphoserine is present on residues Ser333, Ser342, and Ser359. Residues 348 to 366 (PSGLPSGLPSGSPSRSRLS) are compositionally biased toward low complexity. An omega-N-methylarginine mark is found at Arg364 and Arg371. A phosphoserine mark is found at Ser378, Ser397, and Ser399. Polar residues predominate over residues 391–400 (PTSQGVSPSP). A compositionally biased stretch (basic and acidic residues) spans 404 to 415 (LERRDVKPDEDL). Tyr431 carries the phosphotyrosine modification. The segment at 501–676 (GFRLPPSSPQ…AVSSTPAGQP (176 aa)) is disordered. The segment covering 520 to 531 (GGPPPPHSPYSG) has biased composition (pro residues). Ser527, Ser530, and Ser534 each carry phosphoserine. An Omega-N-methylarginine modification is found at Arg535. Ser537, Ser547, Ser549, Ser551, and Ser556 each carry phosphoserine. Over residues 595-607 (KDTETRERMEAME) the composition is skewed to basic and acidic residues. Residues Ser631 and Ser655 each carry the phosphoserine modification. A phosphothreonine mark is found at Thr658 and Thr671. The interaction with SNAP25 stretch occupies residues 681–731 (RLQMQMHLRGLQNSASDLRGQLQQLRKLQLQNQESVRALLKRTEAELSMRV). 2 coiled-coil regions span residues 688-708 (LRGL…LRKL) and 760-780 (EELI…IQRD). Phosphoserine occurs at positions 878 and 900. Disordered regions lie at residues 891 to 949 (GLDF…ERDW) and 983 to 1065 (DCAS…VVTS). The residue at position 918 (Thr918) is a Phosphothreonine. Residue Ser1021 is modified to Phosphoserine. Residues 1036–1045 (KSPPPPPPRR) show a composition bias toward pro residues. Residues Ser1077 and Ser1094 each carry the phosphoserine modification. The segment at 1141–1163 (SRLKAAQGPAGSPDKGKHGKQRT) is disordered.

It belongs to the SRCIN1 family. Interacts with BCAR1/p130Cas through its C-terminal domain and with CSK, CTTN and SRC. Also interacts with MAPRE3/EB3, SORBS3/vinexin and the N-terminal coiled-coil region of SNAP25. Post-translationally, tyrosine-phosphorylated in response to EGF and to cell adhesion to integrin ligands. As to expression, expressed exclusively in brain. Abundant in telencephalon and expressed moderately in cerebellum, hypothalamus, thalamus, superior and inferior colliculi, and olfactory bulb. No expression detected in medulla oblongata, spinal cord or pituitary gland. Enriched in the neuropil rather than soma in the thalamus, corpus striatum and cerebral cortex. Detected in astrocytes.

Its subcellular location is the cytoplasm. It localises to the cytoskeleton. The protein localises to the cell projection. It is found in the axon. The protein resides in the dendrite. Its subcellular location is the presynapse. It localises to the postsynapse. The protein localises to the postsynaptic density. Acts as a negative regulator of SRC by activating CSK which inhibits SRC activity and downstream signaling, leading to impaired cell spreading and migration. Regulates dendritic spine morphology. Involved in calcium-dependent exocytosis. May play a role in neurotransmitter release or synapse maintenance. The polypeptide is SRC kinase signaling inhibitor 1 (Rattus norvegicus (Rat)).